A 295-amino-acid chain; its full sequence is Light-independent protochlorophyllide reductase iron-sulfur ATP-binding protein (295 aa).

ATP-binding positions include G39–T44 and K68. S43 is a binding site for Mg(2+). Positions 124 and 158 each coordinate [4Fe-4S] cluster. N209–R210 provides a ligand contact to ATP.

This sequence belongs to the NifH/BchL/ChlL family. As to quaternary structure, homodimer. Protochlorophyllide reductase is composed of three subunits; ChlL, ChlN and ChlB. It depends on [4Fe-4S] cluster as a cofactor.

It catalyses the reaction chlorophyllide a + oxidized 2[4Fe-4S]-[ferredoxin] + 2 ADP + 2 phosphate = protochlorophyllide a + reduced 2[4Fe-4S]-[ferredoxin] + 2 ATP + 2 H2O. Its pathway is porphyrin-containing compound metabolism; chlorophyll biosynthesis (light-independent). In terms of biological role, component of the dark-operative protochlorophyllide reductase (DPOR) that uses Mg-ATP and reduced ferredoxin to reduce ring D of protochlorophyllide (Pchlide) to form chlorophyllide a (Chlide). This reaction is light-independent. The L component serves as a unique electron donor to the NB-component of the complex, and binds Mg-ATP. The polypeptide is Light-independent protochlorophyllide reductase iron-sulfur ATP-binding protein (Prochlorococcus marinus (strain MIT 9312)).